The chain runs to 215 residues: S-crystallin 4 (215 aa).

The region spanning 2–80 is the GST N-terminal domain; that stretch reads PSYTLHYFNH…YLAREFGFHG (79 aa). One can recognise a GST C-terminal domain in the interval 82-215; it reads NNMDMARVDY…YLQKRSRTEF (134 aa).

It belongs to the GST superfamily. Lens.

Functionally, S-crystallins are structural components of squids and octopi eye lens. Contains relatively little if any GST activity. The sequence is that of S-crystallin 4 from Enteroctopus dofleini (North Pacific giant octopus).